Here is a 429-residue protein sequence, read N- to C-terminus: Melanoma-associated antigen 11 (429 aa).

Disordered regions lie at residues 1–30 (METQFRRGGLGCSPASIKRKKKREDSGDFG) and 188–215 (IFGSLSDEGSGSQEKEGPSTSPDLIDPE). Polar residues predominate over residues 194–209 (DEGSGSQEKEGPSTSP). The 200-residue stretch at 222–421 (LHDKIIDLVH…TSYPSLYEDA (200 aa)) folds into the MAGE domain.

In terms of tissue distribution, expressed in tumors of several types, such as melanoma, head and neck squamous cell carcinoma, lung carcinoma and breast carcinoma. Expressed in testis, ovary, prostate, cancerous prostate, breast and adrenal tissue.

It localises to the nucleus. It is found in the cytoplasm. Its function is as follows. Acts as androgen receptor coregulator that increases androgen receptor activity by modulating the receptors interdomain interaction. May play a role in embryonal development and tumor transformation or aspects of tumor progression. The polypeptide is Melanoma-associated antigen 11 (Homo sapiens (Human)).